The primary structure comprises 487 residues: ATP-dependent rRNA helicase RRP3 (487 aa).

Positions 22-67 (IKRKALEKQQQAHANEPSPSDEDSAQSNSKDSNSNEQPEESEEIFE) are disordered. Positions 67–95 (ESFTELDLVPELIEACKNLNYNKPTPIQS) match the Q motif motif. The region spanning 98-270 (IPPALKGSDI…RASLTNPVKC (173 aa)) is the Helicase ATP-binding domain. 111-118 (AQTGSGKT) is a binding site for ATP. Residues 217-220 (DEAD) carry the DEAD box motif. The Helicase C-terminal domain maps to 298–442 (LIYLLNEFIG…ENVDKDAILA (145 aa)). The interval 459 to 487 (NRRNKEKQARGKGRRGRMATRDNMDREER) is disordered. A compositionally biased stretch (basic and acidic residues) spans 477–487 (ATRDNMDREER).

The protein belongs to the DEAD box helicase family. DDX47/RRP3 subfamily. Interacts with the SSU processome.

Its subcellular location is the nucleus. The enzyme catalyses ATP + H2O = ADP + phosphate + H(+). In terms of biological role, ATP-dependent rRNA helicase required for pre-ribosomal RNA processing. Involved in the maturation of the 35S-pre-rRNA and to its cleavage to mature 18S rRNA. The chain is ATP-dependent rRNA helicase RRP3 from Kluyveromyces lactis (strain ATCC 8585 / CBS 2359 / DSM 70799 / NBRC 1267 / NRRL Y-1140 / WM37) (Yeast).